Here is a 473-residue protein sequence, read N- to C-terminus: PPE family protein PPE37 (473 aa).

Positions 203 to 206 (DFLE) match the Iron-binding motif motif. Transmembrane regions (helical) follow at residues 227 to 247 (VLDW…AYLV) and 250 to 270 (PLIY…PAGL).

The protein belongs to the mycobacterial PPE family.

It is found in the cell membrane. Essential for efficient heme-iron acquisition (HIA). Binds iron. Strains with a functional PPE37 can utilize low concentrations of hemin very efficiently in broth and on agar plates. During infection, might interfere with the pro-inflammatory cytokine response in infected macrophages. Its function is as follows. In vitro, incubation of the protein in the presence of M.tuberculosis proteases leads to the cleavage of PPE37 into two segments, the N- and C-terminal segments. Transfection of human monocytic THP-1 cell lines with the N-terminal segment leads to the proliferation and differentiation of THP-1 cells into adherent stellate cells with dendritic cell-like morphology. Transfection of THP-1 cells with the C-terminal segment leads to the apoptosis of the cells. Recombinant protein antigens display strong B-cell response in tuberculosis patients and immunized mice. The chain is PPE family protein PPE37 from Mycobacterium tuberculosis (strain ATCC 25618 / H37Rv).